A 494-amino-acid polypeptide reads, in one-letter code: Protein DETOXIFICATION 22 (494 aa).

The next 12 membrane-spanning stretches (helical) occupy residues 40–60 (LWVV…VSLV), 78–98 (ITFT…ASAL), 123–143 (IVLT…GPIL), 159–179 (IALW…CQIF), 188–208 (IIAY…WLLV), 217–237 (GAMT…LLYV), 268–288 (GGMV…TGNL), 299–319 (AICI…LAAV), 340–360 (IVAV…FLFL), 384–404 (LLAF…VAVG), 416–436 (LACY…VVGL), and 441–461 (VWIG…IMTL).

This sequence belongs to the multi antimicrobial extrusion (MATE) (TC 2.A.66.1) family.

It localises to the membrane. This Arabidopsis thaliana (Mouse-ear cress) protein is Protein DETOXIFICATION 22.